The chain runs to 373 residues: Phosphoserine aminotransferase (373 aa).

Arg-46 contributes to the L-glutamate binding site. 4 residues coordinate pyridoxal 5'-phosphate: Phe-104, Thr-150, Asp-172, and Gln-195. N6-(pyridoxal phosphate)lysine is present on Lys-196. Pyridoxal 5'-phosphate is bound at residue 247–248 (NT).

This sequence belongs to the class-V pyridoxal-phosphate-dependent aminotransferase family. SerC subfamily. Homodimer. Pyridoxal 5'-phosphate serves as cofactor.

It localises to the cytoplasm. The catalysed reaction is O-phospho-L-serine + 2-oxoglutarate = 3-phosphooxypyruvate + L-glutamate. It catalyses the reaction 4-(phosphooxy)-L-threonine + 2-oxoglutarate = (R)-3-hydroxy-2-oxo-4-phosphooxybutanoate + L-glutamate. Its pathway is amino-acid biosynthesis; L-serine biosynthesis; L-serine from 3-phospho-D-glycerate: step 2/3. It functions in the pathway cofactor biosynthesis; pyridoxine 5'-phosphate biosynthesis; pyridoxine 5'-phosphate from D-erythrose 4-phosphate: step 3/5. Its function is as follows. Catalyzes the reversible conversion of 3-phosphohydroxypyruvate to phosphoserine and of 3-hydroxy-2-oxo-4-phosphonooxybutanoate to phosphohydroxythreonine. The sequence is that of Phosphoserine aminotransferase from Rhodococcus jostii (strain RHA1).